Here is a 332-residue protein sequence, read N- to C-terminus: MEKQRLTAQLSSLRVPLFSVPWPGQCSNKAEVIEARMMKWADEHNLLVTDEYRNRVIRTRYGLLAARCYPNAGEELLQAIADCLVWFFLADDLFVDRVEVATDETIRNLTAMVDVLDLNVAGSPPVFGELAWLDVCQRLRRLLQAEAFERFAQGMRLWATTAALQILNHLRPTSVGMREYQTIRRHTSGMNPCTSLADAANKGSVQACEFYDADVQTLVRQTNNIVCWANDIQSLRIEIHQPGQFRNMVTIYAQQGQSLQDAVETTATRVNKEIASFCELADAVTARPISDELHGLIDGLKYWIRGYLDWVVHDTLRYADQFIESDADDRRF.

Residues Asp-91 and Asp-96 each contribute to the Mg(2+) site. The short motif at 91-96 (DDLFVD) is the DDXXXD motif element. Residue Arg-184 participates in substrate binding. Residues Asn-230, Ser-234, and Glu-238 each coordinate Mg(2+).

It belongs to the terpene synthase family. The cofactor is Mg(2+).

The enzyme catalyses (2E,6E)-farnesyl diphosphate + H2O = (+)-corvol ether B + diphosphate. It catalyses the reaction (2E,6E)-farnesyl diphosphate + H2O = (+)-corvol ether A + diphosphate. Functionally, terpene synthase that catalyzes the conversion of (2E,6E)-farnesyl diphosphate (FPP) into sesquiterpenes which are important for fungi-environment interactions. Produces a mixture consisting of 8 sesquiterpenes including corvol ethers A and B, as well as traces of epizonarene, gamma-cadinene, delta-cadinene, alpha-cadinene, alpha-cadinol, and an unidentified sesquiterpene. The major product is corvol ether B. The protein is Sesquiterpene synthase MBR_10393 of Metarhizium brunneum (strain ARSEF 3297).